The following is a 218-amino-acid chain: LOB domain-containing protein 29 (218 aa).

The region spanning 10–112 (SPCGACKFLR…AELEILKQQA (103 aa)) is the LOB domain.

The protein belongs to the LOB domain-containing protein family. Expressed in roots.

Its function is as follows. Involved in lateral root formation. Regulated by the transcriptional activators ARF7 and ARF19. In Arabidopsis thaliana (Mouse-ear cress), this protein is LOB domain-containing protein 29 (LBD29).